A 133-amino-acid polypeptide reads, in one-letter code: MVSPEADRVLRYLVEVEELAEAVLSDKRQIVDLDTKRNQNREGLRALQKDPSVSEDVMVCFGNMFIKMPHLKTKEMIQKDQEHLDKEIERLRSQLKVKVNRLLEAQGKPELKGFNLNPLNQDELKALQVILKG.

The protein belongs to the prefoldin subunit beta family. Component of the PAQosome complex which is responsible for the biogenesis of several protein complexes and which consists of R2TP complex members RUVBL1, RUVBL2, RPAP3 and PIH1D1, URI complex members PFDN2, PFDN6, PDRG1, UXT and URI1 as well as ASDURF, POLR2E and DNAAF10/WDR92.

The protein resides in the cytoplasm. Functionally, may play a role in chaperone-mediated protein folding. The chain is p53 and DNA damage-regulated protein 1 (Pdrg1) from Rattus norvegicus (Rat).